The sequence spans 398 residues: Dual-specificity RNA methyltransferase RlmN (398 aa).

Residue glutamate 121 is the Proton acceptor of the active site. One can recognise a Radical SAM core domain in the interval 127–370 (ETDRGTLCVS…VRTPRGRDIL (244 aa)). Residues cysteine 134 and cysteine 373 are joined by a disulfide bond. Residues cysteine 141, cysteine 145, and cysteine 148 each contribute to the [4Fe-4S] cluster site. Residues 199 to 200 (GE), serine 231, 253 to 255 (SLH), and asparagine 330 contribute to the S-adenosyl-L-methionine site. The active-site S-methylcysteine intermediate is the cysteine 373.

It belongs to the radical SAM superfamily. RlmN family. It depends on [4Fe-4S] cluster as a cofactor.

Its subcellular location is the cytoplasm. It catalyses the reaction adenosine(2503) in 23S rRNA + 2 reduced [2Fe-2S]-[ferredoxin] + 2 S-adenosyl-L-methionine = 2-methyladenosine(2503) in 23S rRNA + 5'-deoxyadenosine + L-methionine + 2 oxidized [2Fe-2S]-[ferredoxin] + S-adenosyl-L-homocysteine. The enzyme catalyses adenosine(37) in tRNA + 2 reduced [2Fe-2S]-[ferredoxin] + 2 S-adenosyl-L-methionine = 2-methyladenosine(37) in tRNA + 5'-deoxyadenosine + L-methionine + 2 oxidized [2Fe-2S]-[ferredoxin] + S-adenosyl-L-homocysteine. Its function is as follows. Specifically methylates position 2 of adenine 2503 in 23S rRNA and position 2 of adenine 37 in tRNAs. m2A2503 modification seems to play a crucial role in the proofreading step occurring at the peptidyl transferase center and thus would serve to optimize ribosomal fidelity. The chain is Dual-specificity RNA methyltransferase RlmN from Rhodopseudomonas palustris (strain BisB5).